The chain runs to 91 residues: PqqA binding protein (91 aa).

This sequence belongs to the PqqD family. In terms of assembly, monomer. Interacts with PqqE.

It participates in cofactor biosynthesis; pyrroloquinoline quinone biosynthesis. Its function is as follows. Functions as a PqqA binding protein and presents PqqA to PqqE, in the pyrroloquinoline quinone (PQQ) biosynthetic pathway. The polypeptide is PqqA binding protein (Pseudomonas fluorescens (strain Pf0-1)).